The chain runs to 217 residues: MQIYLDTANLDEIRTAASWGVLSGVTTNPSLMAKEKGADFKATIQEIASLVDGPISAETTALDADGMVREGREFAAWHPNVVVKVPSTTEGLKAVSRLAREGIRCNVTLCFNAIQALLAARAGAFIISPFVGRVDDVGVDGMDLIREIVQIYRQHRITTLVLAASIRHPRHIVEAALAGADIATCPFKVLEQSMRHPLTDIGIERFLADWKAWQQGK.

The active-site Schiff-base intermediate with substrate is Lys-84.

This sequence belongs to the transaldolase family. Type 3B subfamily.

Its subcellular location is the cytoplasm. It catalyses the reaction D-sedoheptulose 7-phosphate + D-glyceraldehyde 3-phosphate = D-erythrose 4-phosphate + beta-D-fructose 6-phosphate. Its pathway is carbohydrate degradation; pentose phosphate pathway; D-glyceraldehyde 3-phosphate and beta-D-fructose 6-phosphate from D-ribose 5-phosphate and D-xylulose 5-phosphate (non-oxidative stage): step 2/3. Transaldolase is important for the balance of metabolites in the pentose-phosphate pathway. This Roseiflexus sp. (strain RS-1) protein is Probable transaldolase.